The primary structure comprises 405 residues: Na(+)/H(+) antiporter NhaA 1 (405 aa).

Helical transmembrane passes span 20 to 40, 68 to 88, 105 to 125, 134 to 154, 163 to 183, 186 to 206, 214 to 234, 263 to 283, 301 to 321, 334 to 354, and 371 to 391; these read FVSDASAGILLILVAAAAMIV, LHLWINDGLMAIFFFVVGLEV, LPVLAAIAGMAVPAIVYVGVV, GWAIPAATDIAFAMGVLGLLG, LFLLTVAIVDDIGAVLVIAAF, ANLKVMWLVIALGIFGVMVGM, IWPYILVALVLWVAVLFSGVH, GLAPWSAYLVVPIFGFANAGV, IAAGLVVGKQLGIFGIIVAAV, WIEIWGVSILTGIGFTMSLFI, and IGILGGSLISAILGYTILRLT.

It belongs to the NhaA Na(+)/H(+) (TC 2.A.33) antiporter family.

Its subcellular location is the cell inner membrane. The enzyme catalyses Na(+)(in) + 2 H(+)(out) = Na(+)(out) + 2 H(+)(in). Na(+)/H(+) antiporter that extrudes sodium in exchange for external protons. In Erythrobacter litoralis (strain HTCC2594), this protein is Na(+)/H(+) antiporter NhaA 1.